A 641-amino-acid polypeptide reads, in one-letter code: Transcription termination factor MTERF2, chloroplastic (641 aa).

Disordered regions lie at residues 54 to 80 (LKLNKNPNESQETFVPPPPPPRRDLDG) and 606 to 641 (FEAGLDSEDSQPSDENISDQEIAFSDEAEEEEDLTE). The span at 610–641 (LDSEDSQPSDENISDQEIAFSDEAEEEEDLTE) shows a compositional bias: acidic residues.

It belongs to the mTERF family.

It is found in the plastid. The protein localises to the chloroplast. Functionally, transcription termination factor involved in processing of plastid transcripts. Essential for embryogenesis. This chain is Transcription termination factor MTERF2, chloroplastic, found in Arabidopsis thaliana (Mouse-ear cress).